The sequence spans 546 residues: Glucose-6-phosphate isomerase (546 aa).

The active-site Proton donor is Glu353. Active-site residues include His384 and Lys512.

This sequence belongs to the GPI family.

It localises to the cytoplasm. It carries out the reaction alpha-D-glucose 6-phosphate = beta-D-fructose 6-phosphate. Its pathway is carbohydrate biosynthesis; gluconeogenesis. The protein operates within carbohydrate degradation; glycolysis; D-glyceraldehyde 3-phosphate and glycerone phosphate from D-glucose: step 2/4. In terms of biological role, catalyzes the reversible isomerization of glucose-6-phosphate to fructose-6-phosphate. In Methylococcus capsulatus (strain ATCC 33009 / NCIMB 11132 / Bath), this protein is Glucose-6-phosphate isomerase.